A 204-amino-acid chain; its full sequence is 3,4-dihydroxy-2-butanone 4-phosphate synthase (204 aa).

Glu27 is a binding site for Mg(2+). Residue Asp31 participates in D-ribulose 5-phosphate binding. S-glutathionyl cysteine is present on Cys56. D-ribulose 5-phosphate-binding positions include Thr82 and 140–144 (RDGHT). Residue His143 coordinates Mg(2+).

The protein belongs to the DHBP synthase family. Homodimer. Mg(2+) serves as cofactor. The cofactor is Mn(2+). S-glutathionylation is reversible and dependent on a glutaredoxin.

The enzyme catalyses D-ribulose 5-phosphate = (2S)-2-hydroxy-3-oxobutyl phosphate + formate + H(+). It participates in cofactor biosynthesis; riboflavin biosynthesis; 2-hydroxy-3-oxobutyl phosphate from D-ribulose 5-phosphate: step 1/1. Its function is as follows. Catalyzes the conversion of D-ribulose 5-phosphate to formate and 3,4-dihydroxy-2-butanone 4-phosphate. This chain is 3,4-dihydroxy-2-butanone 4-phosphate synthase, found in Schizosaccharomyces pombe (strain 972 / ATCC 24843) (Fission yeast).